Consider the following 457-residue polypeptide: Bifunctional protein GlmU (457 aa).

The segment at 1–230 (MPLSLPLHIV…PREVEGVNDL (230 aa)) is pyrophosphorylase. UDP-N-acetyl-alpha-D-glucosamine contacts are provided by residues 12 to 15 (LAAG), K26, Q78, 83 to 84 (GT), 105 to 107 (YGD), G140, E155, N170, and N228. D107 provides a ligand contact to Mg(2+). Position 228 (N228) interacts with Mg(2+). Residues 231 to 251 (WQLTQLERTWQIRAARALCLQ) are linker. An N-acetyltransferase region spans residues 252 to 457 (GARVADPARL…DGWQRPKKKT (206 aa)). UDP-N-acetyl-alpha-D-glucosamine is bound by residues R334 and K352. H364 (proton acceptor) is an active-site residue. UDP-N-acetyl-alpha-D-glucosamine-binding residues include Y367 and N378. Acetyl-CoA-binding positions include A381, 387–388 (NY), S406, A424, and R441.

The protein in the N-terminal section; belongs to the N-acetylglucosamine-1-phosphate uridyltransferase family. This sequence in the C-terminal section; belongs to the transferase hexapeptide repeat family. Homotrimer. It depends on Mg(2+) as a cofactor.

It is found in the cytoplasm. It carries out the reaction alpha-D-glucosamine 1-phosphate + acetyl-CoA = N-acetyl-alpha-D-glucosamine 1-phosphate + CoA + H(+). The enzyme catalyses N-acetyl-alpha-D-glucosamine 1-phosphate + UTP + H(+) = UDP-N-acetyl-alpha-D-glucosamine + diphosphate. Its pathway is nucleotide-sugar biosynthesis; UDP-N-acetyl-alpha-D-glucosamine biosynthesis; N-acetyl-alpha-D-glucosamine 1-phosphate from alpha-D-glucosamine 6-phosphate (route II): step 2/2. It participates in nucleotide-sugar biosynthesis; UDP-N-acetyl-alpha-D-glucosamine biosynthesis; UDP-N-acetyl-alpha-D-glucosamine from N-acetyl-alpha-D-glucosamine 1-phosphate: step 1/1. The protein operates within bacterial outer membrane biogenesis; LPS lipid A biosynthesis. In terms of biological role, catalyzes the last two sequential reactions in the de novo biosynthetic pathway for UDP-N-acetylglucosamine (UDP-GlcNAc). The C-terminal domain catalyzes the transfer of acetyl group from acetyl coenzyme A to glucosamine-1-phosphate (GlcN-1-P) to produce N-acetylglucosamine-1-phosphate (GlcNAc-1-P), which is converted into UDP-GlcNAc by the transfer of uridine 5-monophosphate (from uridine 5-triphosphate), a reaction catalyzed by the N-terminal domain. This is Bifunctional protein GlmU from Xylella fastidiosa (strain M12).